Reading from the N-terminus, the 260-residue chain is Putative sgc region transcriptional regulator (260 aa).

The region spanning 5–61 (RPDRIKQMLHYLWQHRHLSTQQAMELFGYAEATVRRDFQYIVNQYPGMIRGHGCLDF) is the HTH deoR-type domain. The H-T-H motif DNA-binding region spans 22 to 41 (LSTQQAMELFGYAEATVRRD).

Its function is as follows. Putative transcriptional regulator for the sgcREAQCX region. This chain is Putative sgc region transcriptional regulator (sgcR), found in Escherichia coli (strain K12).